We begin with the raw amino-acid sequence, 510 residues long: DNA nucleotidylexotransferase (510 aa).

Residues 11–17 (PRRKQPK) carry the Nuclear localization signal motif. The 98-residue stretch at 27–124 (KYDIKFKDIA…QPVEIERKHR (98 aa)) folds into the BRCT domain. Residues 254 to 258 (VGLRT) are involved in DNA binding. A 2'-deoxyribonucleoside 5'-triphosphate contacts are provided by residues 329-334 (GFRRGN) and 338-341 (HDVD). Mg(2+) is bound by residues Asp339, Asp341, and Asp434. 449–450 (GW) is a binding site for a 2'-deoxyribonucleoside 5'-triphosphate.

It belongs to the DNA polymerase type-X family. It depends on Mg(2+) as a cofactor.

Its subcellular location is the nucleus. It catalyses the reaction DNA(n) + a 2'-deoxyribonucleoside 5'-triphosphate = DNA(n+1) + diphosphate. In terms of biological role, template-independent DNA polymerase which catalyzes the random addition of deoxynucleoside 5'-triphosphate to the 3'-end of a DNA initiator. One of the in vivo functions of this enzyme is the addition of nucleotides at the junction (N region) of rearranged Ig heavy chain and T-cell receptor gene segments during the maturation of B- and T-cells. This chain is DNA nucleotidylexotransferase (DNTT), found in Ambystoma mexicanum (Axolotl).